A 206-amino-acid chain; its full sequence is IMPACT family member HI_0722 (206 aa).

This sequence belongs to the IMPACT family.

The polypeptide is IMPACT family member HI_0722 (Haemophilus influenzae (strain ATCC 51907 / DSM 11121 / KW20 / Rd)).